The sequence spans 105 residues: Large ribosomal subunit protein eL36 (105 aa).

The disordered stretch occupies residues 9 to 31; sequence VGLNKGHKVTKNVSKPRHSRRRR. A compositionally biased stretch (basic residues) spans 13–31; that stretch reads KGHKVTKNVSKPRHSRRRR. K62 bears the N6-acetyllysine mark.

This sequence belongs to the eukaryotic ribosomal protein eL36 family. As to quaternary structure, component of the large ribosomal subunit.

It localises to the cytoplasm. It is found in the cytosol. Functionally, component of the large ribosomal subunit. The ribosome is a large ribonucleoprotein complex responsible for the synthesis of proteins in the cell. This Oryctolagus cuniculus (Rabbit) protein is Large ribosomal subunit protein eL36 (RPL36).